The sequence spans 1190 residues: Ras-specific guanine nucleotide-releasing factor 2 (1190 aa).

Residues E22–Y133 form the PH 1 domain. Positions E155–R193 form a coiled coil. The IQ domain maps to D205–C234. One can recognise a DH domain in the interval K243–E429. The region spanning P470–D588 is the PH 2 domain. In terms of domain architecture, N-terminal Ras-GEF spans K635–G755. Residues V713 to L744 form a disordered region. S725 and S726 each carry phosphoserine. Residue S736 is modified to Phosphoserine; by CDK5. The segment at K743–N751 is regulates proteasomal degradation. 2 positions are modified to phosphoserine: S745 and S749. Residues L757–T826 are disordered. Residues T760–A776 show a composition bias toward low complexity. The span at T798–P810 shows a compositional bias: polar residues. Phosphoserine occurs at positions 801, 805, and 925. A Ras-GEF domain is found at S955–R1187. The interval A1052 to K1081 is responsible of the affinity for farnesylated versus geranylgeranylated Ras.

Homooligomer and heterooligomer with RASGRF1. Interacts with Ras and RAC1. Interacts in a calcium-dependent manner with calmodulin. Interacts with CDK5R1 and probably EPB49. Interacts with the AMPA receptor through GRIA1. Interacts with microtubules. In terms of processing, phosphorylated by CDK5; down-regulates RASGRF2-mediated RAC1 activation. Post-translationally, ubiquitinated upon interaction with Ras. Ubiquitination leads to degradation through the 26S proteasome. As to expression, widely expressed. Detected in brain, lung, spleen, pancreas, kidney, liver, heart, mammary gland and skeletal muscle.

Its subcellular location is the cytoplasm. The protein localises to the cell membrane. The protein resides in the endoplasmic reticulum membrane. In terms of biological role, functions as a calcium-regulated nucleotide exchange factor activating both Ras and RAC1 through the exchange of bound GDP for GTP. Preferentially activates HRAS in vivo compared to RRAS based on their different types of prenylation. Functions in synaptic plasticity by contributing to the induction of long term potentiation. This Rattus norvegicus (Rat) protein is Ras-specific guanine nucleotide-releasing factor 2 (Rasgrf2).